Here is an 84-residue protein sequence, read N- to C-terminus: Small ribosomal subunit protein bS20 (84 aa).

The protein belongs to the bacterial ribosomal protein bS20 family.

Binds directly to 16S ribosomal RNA. This Bacteroides thetaiotaomicron (strain ATCC 29148 / DSM 2079 / JCM 5827 / CCUG 10774 / NCTC 10582 / VPI-5482 / E50) protein is Small ribosomal subunit protein bS20.